A 147-amino-acid polypeptide reads, in one-letter code: uncharacterized protein (147 aa).

2 helical membrane passes run 41–61 (LANF…ALLI) and 67–87 (LLAA…SFPL).

The protein resides in the cell membrane. This is an uncharacterized protein from Pyrococcus horikoshii (strain ATCC 700860 / DSM 12428 / JCM 9974 / NBRC 100139 / OT-3).